We begin with the raw amino-acid sequence, 159 residues long: Putative pre-16S rRNA nuclease (159 aa).

The protein belongs to the YqgF nuclease family.

It is found in the cytoplasm. Functionally, could be a nuclease involved in processing of the 5'-end of pre-16S rRNA. The protein is Putative pre-16S rRNA nuclease of Agrobacterium fabrum (strain C58 / ATCC 33970) (Agrobacterium tumefaciens (strain C58)).